We begin with the raw amino-acid sequence, 144 residues long: Maximins 3/H16 (144 aa).

The first 18 residues, 1 to 18, serve as a signal peptide directing secretion; that stretch reads MNFKYIVAVSFLIASAYA. 2 consecutive propeptides follow at residues 19 to 43 and 73 to 122; these read RSVQ…REIR and RTAE…KKEK. Ile143 carries the isoleucine amide modification.

This sequence belongs to the bombinin family. As to expression, expressed by the skin glands.

It localises to the secreted. Maximin-3 shows antibacterial activity against both Gram-positive and Gram-negative bacteria. It also shows antimicrobial activity against the fungus C.albicans, but not against A.flavus nor P.uticale. It has little hemolytic activity. It possess a significant cytotoxicity against tumor cell lines. It possess a significant anti-HIV activity. It shows high spermicidal activity. In terms of biological role, maximin-H16 shows antimicrobial activity against bacteria and against the fungus C.albicans. Shows strong hemolytic activity. In Bombina maxima (Giant fire-bellied toad), this protein is Maximins 3/H16.